Reading from the N-terminus, the 310-residue chain is Ribosomal protein uL3 glutamine methyltransferase (310 aa).

The protein belongs to the protein N5-glutamine methyltransferase family. PrmB subfamily.

The catalysed reaction is L-glutaminyl-[ribosomal protein uL3] + S-adenosyl-L-methionine = N(5)-methyl-L-glutaminyl-[ribosomal protein uL3] + S-adenosyl-L-homocysteine + H(+). Specifically methylates large ribosomal subunit protein uL3 on 'Gln-150'. The protein is Ribosomal protein uL3 glutamine methyltransferase of Salmonella typhi.